We begin with the raw amino-acid sequence, 438 residues long: Polycomb protein eed-A (438 aa).

The interval 1 to 67 is disordered; that stretch reads MSEASGRAAG…NAPGRKAWGK (67 aa). Positions 40–57 are enriched in polar residues; it reads SIESGTNTERPDTPTNAA. WD repeat units follow at residues 88 to 131, 139 to 182, 185 to 225, 231 to 270, 301 to 338, 356 to 396, and 405 to 438; these read DHNQ…DIRL, DADE…CIKH, GHGN…LVAI, GHRD…MKTA, IHRN…DDID, SQCD…PHKA, and KCAS…DRLR.

It belongs to the WD repeat ESC family. Component of the prc2/eed-ezh2 complex. Interacts with yy1. Can interact with ezh2, hdac1 and taf9.

The protein localises to the nucleus. In terms of biological role, polycomb group (PcG) protein. Component of the prc2/eed-ezh2 complex, which methylates 'Lys-9' and 'Lys-27' of histone H3, leading to transcriptional repression of the affected target gene. This Xenopus laevis (African clawed frog) protein is Polycomb protein eed-A (eed-a).